Here is a 170-residue protein sequence, read N- to C-terminus: Adenine phosphoribosyltransferase (170 aa).

It belongs to the purine/pyrimidine phosphoribosyltransferase family. As to quaternary structure, homodimer.

The protein localises to the cytoplasm. It catalyses the reaction AMP + diphosphate = 5-phospho-alpha-D-ribose 1-diphosphate + adenine. It participates in purine metabolism; AMP biosynthesis via salvage pathway; AMP from adenine: step 1/1. In terms of biological role, catalyzes a salvage reaction resulting in the formation of AMP, that is energically less costly than de novo synthesis. This is Adenine phosphoribosyltransferase from Geobacillus thermodenitrificans (strain NG80-2).